We begin with the raw amino-acid sequence, 481 residues long: Glutamine synthetase (481 aa).

Residues 22–106 form the GS beta-grasp domain; that stretch reads NEVEFVDFRF…VFCDVYDVYK (85 aa). Residues 114-481 enclose the GS catalytic domain; sequence PRSIAKKALQ…PFEFITTYSC (368 aa). 4 residues coordinate Mg(2+): Glu-139, Glu-141, Glu-223, and Glu-230. L-glutamate-binding positions include 274-275 and Gly-275; that span reads NG. His-279 is a Mg(2+) binding site. Residues 281–283 and Ser-283 each bind ATP; that span reads HVS. L-glutamate contacts are provided by Arg-331, Glu-337, and Arg-349. ATP-binding residues include Arg-349 and Arg-354. Residue Glu-367 coordinates Mg(2+). Arg-369 contacts L-glutamate.

It belongs to the glutamine synthetase family. Oligomer of 12 subunits arranged in the form of two hexameric ring. Mg(2+) serves as cofactor.

The protein localises to the cytoplasm. The catalysed reaction is L-glutamate + NH4(+) + ATP = L-glutamine + ADP + phosphate + H(+). With respect to regulation, the activity of this enzyme could be controlled by adenylation under conditions of abundant glutamine. Its function is as follows. Catalyzes the ATP-dependent biosynthesis of glutamine from glutamate and ammonia. This Helicobacter pylori (strain ATCC 700392 / 26695) (Campylobacter pylori) protein is Glutamine synthetase.